Here is a 540-residue protein sequence, read N- to C-terminus: Chaperonin GroEL (540 aa).

Residues 29–32 (TLGP), 86–90 (DGTTT), glycine 413, 476–478 (NAA), and aspartate 492 each bind ATP.

This sequence belongs to the chaperonin (HSP60) family. In terms of assembly, forms a cylinder of 14 subunits composed of two heptameric rings stacked back-to-back. Interacts with the co-chaperonin GroES.

It is found in the cytoplasm. The catalysed reaction is ATP + H2O + a folded polypeptide = ADP + phosphate + an unfolded polypeptide.. In terms of biological role, together with its co-chaperonin GroES, plays an essential role in assisting protein folding. The GroEL-GroES system forms a nano-cage that allows encapsulation of the non-native substrate proteins and provides a physical environment optimized to promote and accelerate protein folding. The polypeptide is Chaperonin GroEL (Streptococcus pneumoniae (strain ATCC 700669 / Spain 23F-1)).